Reading from the N-terminus, the 81-residue chain is uncharacterized protein (81 aa).

A mitochondrion-targeting transit peptide spans M1–A20. Residues Y27–Q53 are disordered. Residues G28–Q53 show a composition bias toward low complexity. A helical transmembrane segment spans residues I59–M79.

The protein localises to the mitochondrion membrane. This is an uncharacterized protein from Schizosaccharomyces pombe (strain 972 / ATCC 24843) (Fission yeast).